A 443-amino-acid chain; its full sequence is C4-dicarboxylate transport protein (443 aa).

The next 7 membrane-spanning stretches (helical) occupy residues 7–26 (SLYV…GALF), 46–63 (MVIA…VAHM), 76–98 (ALIY…MNVL), 140–162 (LVSA…FGFA), 183–205 (VVFV…AMAF), 218–240 (LGYL…LGLI), and 350–372 (FITL…ALIL). Positions 415–443 (GEDLPTTEPDVASEERGEGREIDSSRPVT) are disordered. Residues 427-443 (SEERGEGREIDSSRPVT) show a composition bias toward basic and acidic residues.

It belongs to the dicarboxylate/amino acid:cation symporter (DAACS) (TC 2.A.23) family.

Its subcellular location is the cell membrane. In terms of biological role, responsible for the transport of dicarboxylates such as succinate, fumarate, and malate across the membrane. In Deinococcus radiodurans (strain ATCC 13939 / DSM 20539 / JCM 16871 / CCUG 27074 / LMG 4051 / NBRC 15346 / NCIMB 9279 / VKM B-1422 / R1), this protein is C4-dicarboxylate transport protein (dctA).